The following is a 253-amino-acid chain: GTP cyclohydrolase III (253 aa).

It belongs to the archaeal-type GTP cyclohydrolase family.

The enzyme catalyses GTP + 3 H2O = 2-amino-5-formylamino-6-(5-phospho-D-ribosylamino)pyrimidin-4(3H)-one + 2 phosphate + 2 H(+). Its function is as follows. Catalyzes the formation of 2-amino-5-formylamino-6-ribofuranosylamino-4(3H)-pyrimidinone ribonucleotide monophosphate and inorganic phosphate from GTP. Also has an independent pyrophosphate phosphohydrolase activity. In Natronomonas pharaonis (strain ATCC 35678 / DSM 2160 / CIP 103997 / JCM 8858 / NBRC 14720 / NCIMB 2260 / Gabara) (Halobacterium pharaonis), this protein is GTP cyclohydrolase III.